Here is a 263-residue protein sequence, read N- to C-terminus: Ret finger protein-like 4B (263 aa).

An RING-type zinc finger spans residues Cys11 to Arg53. A B30.2/SPRY domain is found at His76–Pro263.

This is Ret finger protein-like 4B (RFPL4B) from Homo sapiens (Human).